The chain runs to 101 residues: Small ubiquitin-related modifier 1 (101 aa).

A Ubiquitin-like domain is found at 20–97 (EYIKLKVIGQ…IEVYQEQTGG (78 aa)). A Glycyl lysine isopeptide (Gly-Lys) (interchain with K-? in acceptor proteins) cross-link involves residue Gly-97. A propeptide spanning residues 98-101 (HSTV) is cleaved from the precursor.

The protein belongs to the ubiquitin family. SUMO subfamily. In terms of assembly, interacts with SAE2, UBE2I, RANBP2, PIAS1 and PIAS2. Covalently attached to a number of proteins. In terms of processing, cleavage of precursor form by a sentrin-specific protease is necessary for function.

The protein localises to the nucleus membrane. Its subcellular location is the nucleus speckle. The protein resides in the cytoplasm. It localises to the nucleus. It is found in the PML body. The protein localises to the cell membrane. Its function is as follows. Ubiquitin-like protein that can be covalently attached to proteins as a monomer or a lysine-linked polymer. Covalent attachment via an isopeptide bond to its substrates requires prior activation by the E1 complex SAE1-SAE2 and linkage to the E2 enzyme UBE2I. This post-translational modification on lysine residues of proteins plays a crucial role in a number of cellular processes such as nuclear transport, DNA replication and repair, mitosis and signal transduction. Polymeric SUMO1 chains are also susceptible to polyubiquitination which functions as a signal for proteasomal degradation of modified proteins. The sequence is that of Small ubiquitin-related modifier 1 (SUMO1) from Gallus gallus (Chicken).